Reading from the N-terminus, the 242-residue chain is uncharacterized protein (242 aa).

An S4 RNA-binding domain is found at 2 to 62; the sequence is EKAYKILSVQ…VEKPSVIFED (61 aa). The active site involves D93.

It belongs to the pseudouridine synthase RluA family.

It catalyses the reaction a uridine in RNA = a pseudouridine in RNA. This is an uncharacterized protein from Helicobacter pylori (strain ATCC 700392 / 26695) (Campylobacter pylori).